The following is a 154-amino-acid chain: GTP-dependent dephospho-CoA kinase (154 aa).

The GTP site is built by D34, D53, and E107.

The protein belongs to the GTP-dependent DPCK family.

It carries out the reaction 3'-dephospho-CoA + GTP = GDP + CoA + H(+). Its pathway is cofactor biosynthesis; coenzyme A biosynthesis. In terms of biological role, catalyzes the GTP-dependent phosphorylation of the 3'-hydroxyl group of dephosphocoenzyme A to form coenzyme A (CoA). The polypeptide is GTP-dependent dephospho-CoA kinase (Nitrosopumilus maritimus (strain SCM1)).